The chain runs to 219 residues: MAAVTAKLVKELRDKTGAGMMDCKKALAATDGDTDKAVEWLRQKGIASAEKKSGRTAAEGSIGSYIHTGARVGVLIEINCETDFVARGDMFQELLRDVSMQVAACPNVEYVTTDEIPPEISEREKAIEMGRDDLEGKPEKMKEKIVEGRIAKRLKELALMEQPFIKDSSITVAELVKQAAGKIGENVKVRRFTRYTLGEGIEVEDNDFAAEVASMQNAG.

The segment at 82 to 85 (TDFV) is involved in Mg(2+) ion dislocation from EF-Tu.

This sequence belongs to the EF-Ts family.

Its subcellular location is the cytoplasm. Associates with the EF-Tu.GDP complex and induces the exchange of GDP to GTP. It remains bound to the aminoacyl-tRNA.EF-Tu.GTP complex up to the GTP hydrolysis stage on the ribosome. The chain is Elongation factor Ts from Synechococcus sp. (strain CC9902).